The primary structure comprises 335 residues: Probable cytosolic iron-sulfur protein assembly protein Ciao1 (335 aa).

WD repeat units follow at residues 12–51 (GHKGRIWGVAWHPKGNVFASCGEDKAIRIWSLTGNTWSTK), 57–96 (GHKRTIREIQWSPCGQYLASASFDATTAIWSKSSGEFECN), 101–140 (GHENEVKSVSWSRSGGLLATCSRDKSVWIWEVAGDDEFEC), 146–185 (SHTQDVKRVVWHPTKEILASASYDNTIKMYAEEPIDNDWD), 192–231 (SHTSTIWGIDFDADGERLVSCSDDTTVKIWRAYHPGNSAG), 250–289 (QHSRAIYDVSWCKLTGLIATACGDDGIRIFKETSDSKPDE), and 301–335 (AHDQDVNSVQWNPVVAGQLISCSDDGTIKIWKVTE).

Belongs to the WD repeat CIA1 family.

In terms of biological role, essential component of the cytosolic iron-sulfur (Fe/S) protein assembly machinery. Required for the maturation of extramitochondrial Fe/S proteins. This Drosophila yakuba (Fruit fly) protein is Probable cytosolic iron-sulfur protein assembly protein Ciao1.